A 143-amino-acid polypeptide reads, in one-letter code: Large ribosomal subunit protein uL11 (143 aa).

This sequence belongs to the universal ribosomal protein uL11 family. In terms of assembly, part of the ribosomal stalk of the 50S ribosomal subunit. Interacts with L10 and the large rRNA to form the base of the stalk. L10 forms an elongated spine to which L12 dimers bind in a sequential fashion forming a multimeric L10(L12)X complex. One or more lysine residues are methylated.

Its function is as follows. Forms part of the ribosomal stalk which helps the ribosome interact with GTP-bound translation factors. This is Large ribosomal subunit protein uL11 from Pseudomonas paraeruginosa (strain DSM 24068 / PA7) (Pseudomonas aeruginosa (strain PA7)).